We begin with the raw amino-acid sequence, 210 residues long: Cytochrome c biogenesis ATP-binding export protein CcmA (210 aa).

Residues 3–205 form the ABC transporter domain; that stretch reads LHLQAAGLAC…KPSGYRELNL (203 aa). 37–44 is a binding site for ATP; sequence GPNGSGKT.

The protein belongs to the ABC transporter superfamily. CcmA exporter (TC 3.A.1.107) family. In terms of assembly, the complex is composed of two ATP-binding proteins (CcmA) and two transmembrane proteins (CcmB).

It is found in the cell inner membrane. The enzyme catalyses heme b(in) + ATP + H2O = heme b(out) + ADP + phosphate + H(+). Functionally, part of the ABC transporter complex CcmAB involved in the biogenesis of c-type cytochromes; once thought to export heme, this seems not to be the case, but its exact role is uncertain. Responsible for energy coupling to the transport system. The polypeptide is Cytochrome c biogenesis ATP-binding export protein CcmA (Pseudomonas putida (strain GB-1)).